We begin with the raw amino-acid sequence, 235 residues long: uncharacterized protein (235 aa).

This sequence to E.coli YbeR.

This is an uncharacterized protein from Escherichia coli (strain K12).